The chain runs to 570 residues: Sulfite reductase [NADPH] hemoprotein beta-component (570 aa).

Positions 434, 440, 479, and 483 each coordinate [4Fe-4S] cluster. Position 483 (cysteine 483) interacts with siroheme.

Belongs to the nitrite and sulfite reductase 4Fe-4S domain family. In terms of assembly, alpha(8)-beta(8). The alpha component is a flavoprotein, the beta component is a hemoprotein. Siroheme serves as cofactor. It depends on [4Fe-4S] cluster as a cofactor.

It catalyses the reaction hydrogen sulfide + 3 NADP(+) + 3 H2O = sulfite + 3 NADPH + 4 H(+). It functions in the pathway sulfur metabolism; hydrogen sulfide biosynthesis; hydrogen sulfide from sulfite (NADPH route): step 1/1. In terms of biological role, component of the sulfite reductase complex that catalyzes the 6-electron reduction of sulfite to sulfide. This is one of several activities required for the biosynthesis of L-cysteine from sulfate. This Escherichia coli O9:H4 (strain HS) protein is Sulfite reductase [NADPH] hemoprotein beta-component.